Here is a 468-residue protein sequence, read N- to C-terminus: Tyrosine phenol-lyase (468 aa).

Lys-260 is modified (N6-(pyridoxal phosphate)lysine).

Belongs to the beta-eliminating lyase family. Homotetramer. Requires pyridoxal 5'-phosphate as cofactor.

The catalysed reaction is L-tyrosine + H2O = phenol + pyruvate + NH4(+). This chain is Tyrosine phenol-lyase, found in Lacrimispora saccharolytica (strain ATCC 35040 / DSM 2544 / NRCC 2533 / WM1) (Clostridium saccharolyticum).